Consider the following 430-residue polypeptide: Glutamate-1-semialdehyde 2,1-aminomutase (430 aa).

Position 270 is an N6-(pyridoxal phosphate)lysine (Lys-270).

This sequence belongs to the class-III pyridoxal-phosphate-dependent aminotransferase family. HemL subfamily. As to quaternary structure, homodimer. Pyridoxal 5'-phosphate serves as cofactor.

It localises to the cytoplasm. The enzyme catalyses (S)-4-amino-5-oxopentanoate = 5-aminolevulinate. Its pathway is porphyrin-containing compound metabolism; protoporphyrin-IX biosynthesis; 5-aminolevulinate from L-glutamyl-tRNA(Glu): step 2/2. This chain is Glutamate-1-semialdehyde 2,1-aminomutase, found in Cupriavidus metallidurans (strain ATCC 43123 / DSM 2839 / NBRC 102507 / CH34) (Ralstonia metallidurans).